The sequence spans 534 residues: Glycerol kinase 5 (534 aa).

2 residues coordinate ATP: Ser-33 and Thr-34. Residues Arg-103, Asp-280, and Gln-281 each contribute to the glycerol site. Positions 302, 345, and 445 each coordinate ATP.

Belongs to the FGGY kinase family. In terms of tissue distribution, expressed predominantly in sebaceous glands.

Its subcellular location is the cytoplasm. It carries out the reaction glycerol + ATP = sn-glycerol 3-phosphate + ADP + H(+). It functions in the pathway polyol metabolism; glycerol degradation via glycerol kinase pathway; sn-glycerol 3-phosphate from glycerol: step 1/1. Skin-specific kinase that plays a key role in glycerol metabolism, catalyzing its phosphorylation to produce sn-glycerol 3-phosphate. Involved in skin-specific regulation of sterol regulatory element-binding protein (SREBP) processing and lipid biosynthesis. This is Glycerol kinase 5 (Gk5) from Mus musculus (Mouse).